The chain runs to 401 residues: Tyrosine--tRNA ligase (401 aa).

The short motif at 45–54 (PTAPDLHLGH) is the 'HIGH' region element. The 'KMSKS' region signature appears at 230–234 (KMSKS). K233 contacts ATP. Positions 339–399 (IWLAKALVEC…GKRKFAKLKV (61 aa)) constitute an S4 RNA-binding domain.

This sequence belongs to the class-I aminoacyl-tRNA synthetase family. TyrS type 2 subfamily. Homodimer.

The protein resides in the cytoplasm. The catalysed reaction is tRNA(Tyr) + L-tyrosine + ATP = L-tyrosyl-tRNA(Tyr) + AMP + diphosphate + H(+). Functionally, catalyzes the attachment of tyrosine to tRNA(Tyr) in a two-step reaction: tyrosine is first activated by ATP to form Tyr-AMP and then transferred to the acceptor end of tRNA(Tyr). The polypeptide is Tyrosine--tRNA ligase (Campylobacter jejuni (strain RM1221)).